Consider the following 95-residue polypeptide: Probable FAD-linked sulfhydryl oxidase OPG072 (95 aa).

The Intravirion segment spans residues 1 to 8; that stretch reads MNPKHWGR. The ERV/ALR sulfhydryl oxidase domain occupies 1 to 95; that stretch reads MNPKHWGRAV…AIDVTKVNPL (95 aa). The helical transmembrane segment at 9-25 threads the bilayer; that stretch reads AVWTIIFIVLSQAGLDG. Over 26–95 the chain is Virion surface; it reads NIEACKRKLY…AIDVTKVNPL (70 aa). A disulfide bond links C43 and C46.

Belongs to the orthopoxvirus OPG072 family. Interacts with OPG128/A2.5; this interaction involves formation of a transient disulfide-bonded intermediate, allowing disulfide bond transfer. FAD serves as cofactor.

The protein resides in the virion membrane. It localises to the host cytoplasm. The enzyme catalyses 2 R'C(R)SH + O2 = R'C(R)S-S(R)CR' + H2O2. FAD-dependent sulfhydryl oxidase that catalyzes disulfide bond formation. The complete pathway for formation of disulfide bonds in intracellular virion membrane proteins sequentially involves thiol-disulfide transfer between OPG072/E10, OPG128/A2.5 and OPG088/G4. The protein is Probable FAD-linked sulfhydryl oxidase OPG072 (OPG072) of Bos taurus (Bovine).